The chain runs to 1323 residues: MRELQGDDSSRKSPPSDSVVKNSSPIDYEHSLKSLQDERTLNYPNKQFNSENPSSYYNMDDSGELCNFELEKDSLESMIHESSTALSAQSNTAQDGDQLASSSTISKDHSETLDNKLNDSKILIKKASNSFANFSESVRSSTIVAYSQTPTQRLQGLTSISSSSFDDGSYGSRRISFNSQGVSGRLRRNMDSTVIIPSEDEDLQLPSNSNSNVEYGPFDSTTFDRQLSIEVNQPVGAMSLSPCGRDIALASRYGLLVLDLDNPYNPPRMLRHSTPWEVADTQWNVHAARDQWVVSTSSQKTIVWNLALPNDRAIEFMLHGHTRAVTDMNWHRQNPDVLATCSIDSSVHCWDLRSPRFPVNSFYDWHNGATQVKWNYKNPHILASSHGRLVRIWDDRYGSAPLHTIKTSENITKINGLEFNRACETRLLTCAMDRTVKFWNYEKSTEEPEHLITTDSPVWKARFTPFGDGVILMPQRGDNSVHMYDCRNLDKEGPRAVHRFAGHTDQVKEFLWRCRGEDVFDRDLRDFQLITWSKDHHVRLWPIGNDILNSMGHDRTKPVPFKLTRLGAKYRTYSREPLKQSLINTECDSSDAMNSFDSNFGAERANTSDLSRGFVAFANRKKSKYNLPGSSGFMTRSTKSTNPMTPLNWLRGISMGRLGNADWEVPQNLGEELSWIGQKYSNVSFEKIDVAERTCTISLNAPILPDDGYAYIRLHVYFPNNYPISATPVFQLERSSAFNDEQFNYVFNTLTSISDQCISSHKYCMDACLSYLSGNLSVDEIWKLGFQKDNSDSSSESSADIFQDVFPSMPDFRGGDRGLSHKHQNIPLPKTCAAIFCGNDELVCFFTIKADESAAQATANRETHGRQKLFESFGVLDSSNSVADSDSTNYDDENSLNRGGTSESDSEFIWDVDESNSGSIVFPKSKTSINLNNINSASASIMGSRFGAADIFMSKRPSTKGSNRPSILLSKPSHDFHVVRIISMSKYLPVKRALAAEYVVDTGDKVTVCNKNAEVSAKHNYYRLAKVWLMLGRLLGHLSRTENKDHINDEEAFPWLKSPLAKWVVNSLLDYYASQCNTQMLAMLACVLDIPNPKKQSGNTSADQVLFNQPKQVTEKLGVQLNLPKTKILEKVSSHSLAQITALREKEPKDADSTYSKEKIFSATSTVHLQLMDYDKQNNDFVDAQEIAYTKLLQQKFIQWRATYAEQLDLWGFFIPKLEMLKFNAHEFSSPSEKTLVNHCNSCNSTTSNTRICEKCYSLVPRMSCTFCCLSIHGLCIVCGLCLHVMHEDCYKEWFSNGDSISQSCSSGCGCKCQFQHMSLEKV.

Residues 1-11 show a composition bias toward basic and acidic residues; it reads MRELQGDDSSR. Disordered stretches follow at residues 1 to 57 and 79 to 112; these read MREL…SSYY and IHESSTALSAQSNTAQDGDQLASSSTISKDHSET. The segment covering 12–21 has biased composition (low complexity); the sequence is KSPPSDSVVK. Position 24 is a phosphoserine (Ser-24). Positions 27–40 are enriched in basic and acidic residues; sequence DYEHSLKSLQDERT. Polar residues-rich tracts occupy residues 42–57 and 80–105; these read NYPNKQFNSENPSSYY and HESSTALSAQSNTAQDGDQLASSSTI. 6 WD repeats span residues 271–314, 320–360, 364–403, 409–449, 453–494, and 502–551; these read RHST…DRAI, GHTR…FPVN, DWHNGATQVKWNYKNPHILASSHGRLVRIWDDRYGSAPLH, ENIT…EEPE, TTDS…KEGP, and GHTD…LNSM. In terms of domain architecture, RWD spans 671–779; sequence EELSWIGQKY…SYLSGNLSVD (109 aa). Over residues 879 to 888 the composition is skewed to polar residues; it reads SNSVADSDST. The interval 879–904 is disordered; the sequence is SNSVADSDSTNYDDENSLNRGGTSES. The RING-type; degenerate zinc finger occupies 1265-1309; it reads CTFCCLSIHGLCIVCGLCLHVMHEDCYKEWFSNGDSISQSCSSGC.

This sequence belongs to the WD repeat WDR59 family.

Functionally, may be involved in telomere capping. This is an uncharacterized protein from Schizosaccharomyces pombe (strain 972 / ATCC 24843) (Fission yeast).